The sequence spans 473 residues: Phosphatidylserine synthase 1 (473 aa).

Position 2 is an N-acetylalanine (alanine 2). Topologically, residues 2-35 (ASCVGSRTLSKDDVNYRMHFRMINEQQVEDITID) are cytoplasmic. A helical transmembrane segment spans residues 36–56 (FFYRPHTITLLSFTIISLMYF). The Lumenal segment spans residues 57–72 (AFTRDDSVPEDNIWRG). Residues 73–93 (ILSVIFFFLIISVLAFPNGPF) form a helical membrane-spanning segment. The Cytoplasmic portion of the chain corresponds to 94-102 (TRPHPALWR). Residues 103–123 (MVFGLSVLYFLFLVFLLFLNF) traverse the membrane as a helical segment. Residues 124 to 186 (EQVKSLMYWL…AMKALLIRSY (63 aa)) lie on the Lumenal side of the membrane. A helical transmembrane segment spans residues 187–207 (GLCWTISITWELTELFFMHLL). Over 208–216 (PNFAECWWD) the chain is Cytoplasmic. Residues 217–237 (QVILDILLCNGGGIWLGMVVC) traverse the membrane as a helical segment. Topologically, residues 238–286 (RFLEMRTYHWASFKDIHTTTGKIKRAVLQFTPASWTYVRWFDPKSSFQR) are lumenal. A helical transmembrane segment spans residues 287-307 (VAGIYLFMIIWQLTELNTFFL). Topologically, residues 308–319 (KHIFVFQASHPL) are cytoplasmic. Residues 320-342 (SWGRILFIGCITAPTVRQYYAYL) form a helical membrane-spanning segment. At 343–355 (TDTQCKRVGTQCW) the chain is on the lumenal side. A helical transmembrane segment spans residues 356–376 (VFGVIGFLEAIVCIKFGQDLF). Residues 377-383 (SKTQILY) lie on the Cytoplasmic side of the membrane. The chain crosses the membrane as a helical span at residues 384–404 (VMLWLLCVAFTTFLCLYGMVW). Topologically, residues 405-473 (YAEHYGHREK…SKVTNGVGKK (69 aa)) are lumenal. Phosphoserine occurs at positions 417, 425, 442, and 454. The disordered stretch occupies residues 428-473 (ISWHHGKGSKGSEDSPPKHSSNHESHSSRRRNRHSKSKVTNGVGKK). A compositionally biased stretch (basic and acidic residues) spans 437-454 (KGSEDSPPKHSSNHESHS). The span at 455-464 (SRRRNRHSKS) shows a compositional bias: basic residues.

Belongs to the phosphatidyl serine synthase family. Expressed in kidney, testis, lung, skeletal muscle, liver brain, heart and spleen with highest expression in testis, liver, heart and brain.

Its subcellular location is the endoplasmic reticulum membrane. It catalyses the reaction a 1,2-diacyl-sn-glycero-3-phosphoethanolamine + L-serine = a 1,2-diacyl-sn-glycero-3-phospho-L-serine + ethanolamine. The catalysed reaction is a 1,2-diacyl-sn-glycero-3-phosphocholine + L-serine = a 1,2-diacyl-sn-glycero-3-phospho-L-serine + choline. It participates in phospholipid metabolism; phosphatidylserine biosynthesis. With respect to regulation, potently inhibited by choline in the mitochondria-associated membrane (MAM). Very little inhibition by choline in the endoplasmic reticulum (ER) per se. Functionally, catalyzes a base-exchange reaction in which the polar head group of phosphatidylethanolamine (PE) or phosphatidylcholine (PC) is replaced by L-serine. Catalyzes mainly the conversion of phosphatidylcholine. Also converts, in vitro and to a lesser extent, phosphatidylethanolamine. The chain is Phosphatidylserine synthase 1 (Ptdss1) from Mus musculus (Mouse).